The chain runs to 156 residues: Ribosomal RNA large subunit methyltransferase H (156 aa).

Residues Leu73, Gly104, and 123-128 (IGPLTL) contribute to the S-adenosyl-L-methionine site.

The protein belongs to the RNA methyltransferase RlmH family. Homodimer.

Its subcellular location is the cytoplasm. The catalysed reaction is pseudouridine(1915) in 23S rRNA + S-adenosyl-L-methionine = N(3)-methylpseudouridine(1915) in 23S rRNA + S-adenosyl-L-homocysteine + H(+). Specifically methylates the pseudouridine at position 1915 (m3Psi1915) in 23S rRNA. The sequence is that of Ribosomal RNA large subunit methyltransferase H from Xanthomonas oryzae pv. oryzae (strain MAFF 311018).